Reading from the N-terminus, the 242-residue chain is 1-(5-phosphoribosyl)-5-[(5-phosphoribosylamino)methylideneamino] imidazole-4-carboxamide isomerase (242 aa).

Aspartate 8 functions as the Proton acceptor in the catalytic mechanism. Catalysis depends on aspartate 129, which acts as the Proton donor.

This sequence belongs to the HisA/HisF family.

The protein localises to the cytoplasm. It carries out the reaction 1-(5-phospho-beta-D-ribosyl)-5-[(5-phospho-beta-D-ribosylamino)methylideneamino]imidazole-4-carboxamide = 5-[(5-phospho-1-deoxy-D-ribulos-1-ylimino)methylamino]-1-(5-phospho-beta-D-ribosyl)imidazole-4-carboxamide. It participates in amino-acid biosynthesis; L-histidine biosynthesis; L-histidine from 5-phospho-alpha-D-ribose 1-diphosphate: step 4/9. This is 1-(5-phosphoribosyl)-5-[(5-phosphoribosylamino)methylideneamino] imidazole-4-carboxamide isomerase from Clostridium botulinum (strain Langeland / NCTC 10281 / Type F).